A 171-amino-acid polypeptide reads, in one-letter code: Glucagon family neuropeptides (171 aa).

Positions 1–22 (MYRKALLVWLLVYGIMRCTVHS) are cleaved as a signal peptide. The propeptide occupies 23-76 (SPTALKYPALRLEDEVYDEDGNTLPDFAFDNNPIGIGNPASVFDDMYSFYYPAE). The important for receptor binding stretch occupies residues 145-153 (VKKYLAAVL). The residue at position 164 (Lys164) is a Lysine amide. Positions 168–171 (VAYL) are excised as a propeptide.

This sequence belongs to the glucagon family.

The protein localises to the secreted. Primary role of GRF is to release GH from the pituitary. Functionally, PACAP is a neuropeptide involved in diverse array of physiological processes through activating the PACAP subfamily of class B1 G protein-coupled receptors: VIP receptor 1 (VIPR1), VIP receptor 2 (VIPR2), and PACAP type I receptor (ADCYAP1R1). Exerts neuroprotective and general cytoprotective effects due to anti-apoptotic, anti-inflammatory, and antioxidant actions. The protein is Glucagon family neuropeptides (adcyap1) of Pelophylax ridibundus (Marsh frog).